The following is a 355-amino-acid chain: DNA polymerase IV (355 aa).

In terms of domain architecture, UmuC spans 4-185 (IIHVDMDCFY…LPLKKIPGVG (182 aa)). D8 and D103 together coordinate Mg(2+). Residue E104 is part of the active site.

The protein belongs to the DNA polymerase type-Y family. As to quaternary structure, monomer. It depends on Mg(2+) as a cofactor.

Its subcellular location is the cytoplasm. It carries out the reaction DNA(n) + a 2'-deoxyribonucleoside 5'-triphosphate = DNA(n+1) + diphosphate. In terms of biological role, poorly processive, error-prone DNA polymerase involved in untargeted mutagenesis. Copies undamaged DNA at stalled replication forks, which arise in vivo from mismatched or misaligned primer ends. These misaligned primers can be extended by PolIV. Exhibits no 3'-5' exonuclease (proofreading) activity. May be involved in translesional synthesis, in conjunction with the beta clamp from PolIII. This chain is DNA polymerase IV, found in Pasteurella multocida (strain Pm70).